Reading from the N-terminus, the 211-residue chain is Urease accessory protein UreE (211 aa).

The disordered stretch occupies residues 134-211 (FDPEGGAYAP…DHHGHGHEHK (78 aa)). Over residues 147–202 (PSHDHAGHDHAHDSHAHHDHDHGKHAQHDHGKHDHAHHDHAAHDDHHVHDEHCGHD) the composition is skewed to basic and acidic residues.

Belongs to the UreE family.

Its subcellular location is the cytoplasm. Its function is as follows. Involved in urease metallocenter assembly. Binds nickel. Probably functions as a nickel donor during metallocenter assembly. This Rhodopseudomonas palustris (strain BisB18) protein is Urease accessory protein UreE.